A 291-amino-acid chain; its full sequence is Ribosomal RNA small subunit methyltransferase I (291 aa).

Belongs to the methyltransferase superfamily. RsmI family.

The protein resides in the cytoplasm. The catalysed reaction is cytidine(1402) in 16S rRNA + S-adenosyl-L-methionine = 2'-O-methylcytidine(1402) in 16S rRNA + S-adenosyl-L-homocysteine + H(+). Its function is as follows. Catalyzes the 2'-O-methylation of the ribose of cytidine 1402 (C1402) in 16S rRNA. The sequence is that of Ribosomal RNA small subunit methyltransferase I from Neisseria meningitidis serogroup A / serotype 4A (strain DSM 15465 / Z2491).